A 241-amino-acid chain; its full sequence is Tumor necrosis factor receptor superfamily member 18 (241 aa).

An N-terminal signal peptide occupies residues M1–G25. At Q26 to P162 the chain is on the extracellular side. 5 disulfides stabilise this stretch: C34–C49, C74–C86, C81–C94, C115–C134, and C128–C153. 3 TNFR-Cys repeats span residues C34–C72, C74–C112, and C115–C153. N-linked (GlcNAc...) asparagine glycosylation occurs at N146. Residues L163–A183 traverse the membrane as a helical segment. At Q184–V241 the chain is on the cytoplasmic side. Residues D214–V241 form a disordered region. Basic and acidic residues predominate over residues E222–V241.

Binds to TRAF1, TRAF2, and TRAF3, but not TRAF5 and TRAF6. Binds through its C-terminus to SIVA1/SIVA. In terms of tissue distribution, expressed in lymph node, peripheral blood leukocytes and weakly in spleen.

Its subcellular location is the cell membrane. It is found in the secreted. Functionally, receptor for TNFSF18. Seems to be involved in interactions between activated T-lymphocytes and endothelial cells and in the regulation of T-cell receptor-mediated cell death. Mediated NF-kappa-B activation via the TRAF2/NIK pathway. This chain is Tumor necrosis factor receptor superfamily member 18 (TNFRSF18), found in Homo sapiens (Human).